A 219-amino-acid polypeptide reads, in one-letter code: Oligoribonuclease (219 aa).

The region spanning 30 to 193 (LVWLDMEMTG…ADIVESIEEL (164 aa)) is the Exonuclease domain. Tyr151 is an active-site residue.

Belongs to the oligoribonuclease family.

It is found in the cytoplasm. In terms of biological role, 3'-to-5' exoribonuclease specific for small oligoribonucleotides. In Ralstonia nicotianae (strain ATCC BAA-1114 / GMI1000) (Ralstonia solanacearum), this protein is Oligoribonuclease.